The sequence spans 216 residues: Ras-related protein YPTC6 (216 aa).

19–26 (GDSGVGKS) is a GTP binding site. An Effector region motif is present at residues 41-49 (SKSTIGVEF). GTP is bound by residues 67 to 71 (DTAGQ) and 125 to 128 (NKSD). Residues cysteine 214 and cysteine 215 are each lipidated (S-geranylgeranyl cysteine).

This sequence belongs to the small GTPase superfamily. Rab family.

The protein resides in the cell membrane. This Chlamydomonas reinhardtii (Chlamydomonas smithii) protein is Ras-related protein YPTC6 (YPTC6).